A 644-amino-acid chain; its full sequence is Chaperone protein DnaK (644 aa).

T199 bears the Phosphothreonine; by autocatalysis mark. The segment at 602–644 (LYAEQSAQQQGSAGATGGEQPKADKAADDGVVDAEFEEVKDDK) is disordered. Residues 604-614 (AEQSAQQQGSA) show a composition bias toward low complexity. A compositionally biased stretch (acidic residues) spans 631 to 644 (GVVDAEFEEVKDDK).

Belongs to the heat shock protein 70 family.

In terms of biological role, acts as a chaperone. The sequence is that of Chaperone protein DnaK from Teredinibacter turnerae (strain ATCC 39867 / T7901).